The following is a 470-amino-acid chain: Putative ankyrin repeat protein L279 (470 aa).

4 ANK repeats span residues 119-148 (RDDY…NPGT), 149-178 (NKYA…GSDK), 372-401 (ETQG…NVNE), and 403-431 (NGKP…DISL).

The protein is Putative ankyrin repeat protein L279 of Acanthamoeba polyphaga (Amoeba).